We begin with the raw amino-acid sequence, 552 residues long: Formate--tetrahydrofolate ligase (552 aa).

62–69 (TPAGEGKS) contributes to the ATP binding site.

Belongs to the formate--tetrahydrofolate ligase family.

It catalyses the reaction (6S)-5,6,7,8-tetrahydrofolate + formate + ATP = (6R)-10-formyltetrahydrofolate + ADP + phosphate. Its pathway is one-carbon metabolism; tetrahydrofolate interconversion. The chain is Formate--tetrahydrofolate ligase from Ligilactobacillus salivarius (strain UCC118) (Lactobacillus salivarius).